Reading from the N-terminus, the 371-residue chain is tRNA-specific 2-thiouridylase MnmA (371 aa).

ATP-binding positions include glycine 14–serine 21 and methionine 40. The tract at residues asparagine 100–aspartate 102 is interaction with target base in tRNA. Catalysis depends on cysteine 105, which acts as the Nucleophile. Cysteines 105 and 205 form a disulfide. Glycine 129 is a binding site for ATP. The tract at residues lysine 155–glutamine 157 is interaction with tRNA. Cysteine 205 (cysteine persulfide intermediate) is an active-site residue. The tract at residues arginine 321–tyrosine 322 is interaction with tRNA.

The protein belongs to the MnmA/TRMU family.

It is found in the cytoplasm. The enzyme catalyses S-sulfanyl-L-cysteinyl-[protein] + uridine(34) in tRNA + AH2 + ATP = 2-thiouridine(34) in tRNA + L-cysteinyl-[protein] + A + AMP + diphosphate + H(+). Functionally, catalyzes the 2-thiolation of uridine at the wobble position (U34) of tRNA, leading to the formation of s(2)U34. The chain is tRNA-specific 2-thiouridylase MnmA from Bordetella pertussis (strain Tohama I / ATCC BAA-589 / NCTC 13251).